Consider the following 120-residue polypeptide: Ribonuclease P protein component (120 aa).

This sequence belongs to the RnpA family. Consists of a catalytic RNA component (M1 or rnpB) and a protein subunit.

The catalysed reaction is Endonucleolytic cleavage of RNA, removing 5'-extranucleotides from tRNA precursor.. Functionally, RNaseP catalyzes the removal of the 5'-leader sequence from pre-tRNA to produce the mature 5'-terminus. It can also cleave other RNA substrates such as 4.5S RNA. The protein component plays an auxiliary but essential role in vivo by binding to the 5'-leader sequence and broadening the substrate specificity of the ribozyme. This is Ribonuclease P protein component from Dictyoglomus thermophilum (strain ATCC 35947 / DSM 3960 / H-6-12).